The chain runs to 702 residues: MPLEMFMFATTRMALLIGGAIGGATFPLFAQETTKNDTVIVTSPVQSGATKLATPDIETPQSVSIITRQQFEEQGATSVRQAVSYTPGVYSNQIGASNRFDYIVLRGFSDGSLDNVYLDGLKMMGDTNSHSSLVVDPWFLEDIEVVRGPASVLYGRSSPGGIVALTSRKPAFDAGGEVKLFAGNNNQRGAAFDVTGPLDDNERVAARLSGMTRYADSQFTPLKEERYALMPSLTWRITDRTRLDLMAYPHRDPEGGSHSGLPYQGTVVPYNGGKISNTFFEGEDDYDKYDRRENMVGYNIEHLFDNGWSVRQKLRYLHTKVTLNQVYAAGWLNETALNRGYSGSGEKMSAIALDNQLDGSVDTGAINHRLLVGIDYQDRSNHTTGYYGAFPPIDAFNPVYGAQPDYITLYSREKHKLRQTGYYLQDQMSWDRWRFTLGGRYDRVSVSNIDKLHDSRSDLDKNNVSTRAALLYLFDNGVAPYLSYSTAFTPTSFADENGNVLEPMKGKQWEAGVKYEPPGGNSQFSAAVYRINQTNIATKEEPTDPYRSIGEIESKGVELEAISHLSDSVRLQAAYTYTDIRYKKSSPQEQGKRAVYAPRNQASAWLSYDVKSGLLEGLTLGSGIRYVNGVTSDRLNTHTLPSYTLVDMVVGYDLSSIGLNGLSAQLNVNNLTDKRYVAACNSLSYCYFGAERSIVGSVSWAF.

An N-terminal signal peptide occupies residues 1–30; it reads MPLEMFMFATTRMALLIGGAIGGATFPLFA. The TBDR plug domain maps to 55–168; that stretch reads PDIETPQSVS…PGGIVALTSR (114 aa). Residues 173–702 form the TBDR beta-barrel domain; that stretch reads DAGGEVKLFA…SIVGSVSWAF (530 aa).

Belongs to the TonB-dependent receptor family.

Its subcellular location is the cell outer membrane. In terms of biological role, ferrioxamine binding and uptake, in association with the TonB protein. In Salmonella typhimurium (strain LT2 / SGSC1412 / ATCC 700720), this protein is Ferrioxamine B receptor (foxA).